The chain runs to 477 residues: Bifunctional protein HldE (477 aa).

The segment at 1-318 (MKVNLPAFER…ENAVRGRADT (318 aa)) is ribokinase. Residue 195–198 (NLSE) coordinates ATP. Residue D264 is part of the active site. Residues 344–477 (MTNGVFDILH…IKKIQTESEK (134 aa)) form a cytidylyltransferase region.

The protein in the N-terminal section; belongs to the carbohydrate kinase PfkB family. This sequence in the C-terminal section; belongs to the cytidylyltransferase family. As to quaternary structure, homodimer.

The catalysed reaction is D-glycero-beta-D-manno-heptose 7-phosphate + ATP = D-glycero-beta-D-manno-heptose 1,7-bisphosphate + ADP + H(+). It carries out the reaction D-glycero-beta-D-manno-heptose 1-phosphate + ATP + H(+) = ADP-D-glycero-beta-D-manno-heptose + diphosphate. The protein operates within nucleotide-sugar biosynthesis; ADP-L-glycero-beta-D-manno-heptose biosynthesis; ADP-L-glycero-beta-D-manno-heptose from D-glycero-beta-D-manno-heptose 7-phosphate: step 1/4. It functions in the pathway nucleotide-sugar biosynthesis; ADP-L-glycero-beta-D-manno-heptose biosynthesis; ADP-L-glycero-beta-D-manno-heptose from D-glycero-beta-D-manno-heptose 7-phosphate: step 3/4. Its function is as follows. Catalyzes the phosphorylation of D-glycero-D-manno-heptose 7-phosphate at the C-1 position to selectively form D-glycero-beta-D-manno-heptose-1,7-bisphosphate. Catalyzes the ADP transfer from ATP to D-glycero-beta-D-manno-heptose 1-phosphate, yielding ADP-D-glycero-beta-D-manno-heptose. The sequence is that of Bifunctional protein HldE from Salmonella agona (strain SL483).